Reading from the N-terminus, the 168-residue chain is Large ribosomal subunit protein uL10 (168 aa).

This sequence belongs to the universal ribosomal protein uL10 family. Part of the ribosomal stalk of the 50S ribosomal subunit. The N-terminus interacts with L11 and the large rRNA to form the base of the stalk. The C-terminus forms an elongated spine to which L12 dimers bind in a sequential fashion forming a multimeric L10(L12)X complex.

Functionally, forms part of the ribosomal stalk, playing a central role in the interaction of the ribosome with GTP-bound translation factors. The chain is Large ribosomal subunit protein uL10 from Laribacter hongkongensis (strain HLHK9).